A 439-amino-acid polypeptide reads, in one-letter code: Coiled-coil domain-containing protein 166 (439 aa).

The segment at 1 to 28 (MAPKKKRGPSAGSQPGGAAAAGAEQPLS) is disordered. A compositionally biased stretch (low complexity) spans 9 to 23 (PSAGSQPGGAAAAGA). 2 coiled-coil regions span residues 27–74 (LSER…EENR) and 121–213 (DGVR…VRAL). The interval 276–439 (PGGPPLWERP…AAAEASPGRA (164 aa)) is disordered. Positions 338 to 365 (VLSSMDSRVPSLATSKVGSRMPSLTASR) are enriched in polar residues. 2 stretches are compositionally biased toward low complexity: residues 376–392 (SLEG…RVSS) and 428–439 (AEAAAEASPGRA).

This Homo sapiens (Human) protein is Coiled-coil domain-containing protein 166 (CCDC166).